The following is a 285-amino-acid chain: Probable endonuclease 4 (285 aa).

Zn(2+)-binding residues include H69, H109, E145, D179, H182, H216, D229, H231, and E261.

This sequence belongs to the AP endonuclease 2 family. Requires Zn(2+) as cofactor.

It catalyses the reaction Endonucleolytic cleavage to 5'-phosphooligonucleotide end-products.. Endonuclease IV plays a role in DNA repair. It cleaves phosphodiester bonds at apurinic or apyrimidinic (AP) sites, generating a 3'-hydroxyl group and a 5'-terminal sugar phosphate. The polypeptide is Probable endonuclease 4 (Salmonella arizonae (strain ATCC BAA-731 / CDC346-86 / RSK2980)).